The primary structure comprises 1438 residues: DNA-directed RNA polymerase subunit beta' (1438 aa).

Zn(2+) contacts are provided by Cys-72, Cys-74, Cys-87, and Cys-90. 3 residues coordinate Mg(2+): Asp-483, Asp-485, and Asp-487. Zn(2+)-binding residues include Cys-831, Cys-905, Cys-912, and Cys-915.

It belongs to the RNA polymerase beta' chain family. The RNAP catalytic core consists of 2 alpha, 1 beta, 1 beta' and 1 omega subunit. When a sigma factor is associated with the core the holoenzyme is formed, which can initiate transcription. Mg(2+) is required as a cofactor. The cofactor is Zn(2+).

The catalysed reaction is RNA(n) + a ribonucleoside 5'-triphosphate = RNA(n+1) + diphosphate. Its function is as follows. DNA-dependent RNA polymerase catalyzes the transcription of DNA into RNA using the four ribonucleoside triphosphates as substrates. The protein is DNA-directed RNA polymerase subunit beta' of Flavobacterium psychrophilum (strain ATCC 49511 / DSM 21280 / CIP 103535 / JIP02/86).